A 109-amino-acid polypeptide reads, in one-letter code: MSWQTYVDDHLMCEIEGNYLTSAAIIGQDGSIWAQSASFPQFKPEEITAIMNDFSEPGTLAPTGLYLGGTKYMVIQGEAGAVIRGKKGPGGVTVKKTNQALIIGIYDEP.

This sequence belongs to the profilin family. In terms of assembly, multimer. Occurs in many kinds of cells as a complex with monomeric actin in a 1:1 ratio.

The protein localises to the cytoplasm. It is found in the cytoskeleton. Binds to actin and affects the structure of the cytoskeleton. At high concentrations, profilin prevents the polymerization of actin, whereas it enhances it at low concentrations. By binding to PIP2, it inhibits the formation of IP3 and DG. The protein is Profilin of Actinidia deliciosa (Kiwi).